We begin with the raw amino-acid sequence, 86 residues long: Long neurotoxin homolog (86 aa).

The signal sequence occupies residues 1 to 21 (MKTLLLTLVVVTIVCLALGYT). Cystine bridges form between cysteine 24–cysteine 45, cysteine 27–cysteine 32, cysteine 38–cysteine 63, cysteine 67–cysteine 78, and cysteine 79–cysteine 84.

It belongs to the three-finger toxin family. Ancestral subfamily. Orphan group II sub-subfamily. Expressed by the venom gland.

Its subcellular location is the secreted. Its function is as follows. Binds with low affinity and weakly inhibits muscle nicotinic acetylcholine receptor (nAChR). This Naja atra (Chinese cobra) protein is Long neurotoxin homolog.